We begin with the raw amino-acid sequence, 246 residues long: 4-hydroxy-tetrahydrodipicolinate reductase (246 aa).

Residues 8-13 (GISGRM), 75-77 (GTT), and 99-102 (ASNY) contribute to the NAD(+) site. H132 functions as the Proton donor/acceptor in the catalytic mechanism. Residue H133 coordinates (S)-2,3,4,5-tetrahydrodipicolinate. Residue K136 is the Proton donor of the active site. 142–143 (GT) provides a ligand contact to (S)-2,3,4,5-tetrahydrodipicolinate.

Belongs to the DapB family.

Its subcellular location is the cytoplasm. The enzyme catalyses (S)-2,3,4,5-tetrahydrodipicolinate + NAD(+) + H2O = (2S,4S)-4-hydroxy-2,3,4,5-tetrahydrodipicolinate + NADH + H(+). The catalysed reaction is (S)-2,3,4,5-tetrahydrodipicolinate + NADP(+) + H2O = (2S,4S)-4-hydroxy-2,3,4,5-tetrahydrodipicolinate + NADPH + H(+). It participates in amino-acid biosynthesis; L-lysine biosynthesis via DAP pathway; (S)-tetrahydrodipicolinate from L-aspartate: step 4/4. In terms of biological role, catalyzes the conversion of 4-hydroxy-tetrahydrodipicolinate (HTPA) to tetrahydrodipicolinate. The sequence is that of 4-hydroxy-tetrahydrodipicolinate reductase from Akkermansia muciniphila (strain ATCC BAA-835 / DSM 22959 / JCM 33894 / BCRC 81048 / CCUG 64013 / CIP 107961 / Muc).